Reading from the N-terminus, the 449-residue chain is Phosphoglucosamine mutase (449 aa).

The active-site Phosphoserine intermediate is serine 100. Residues serine 100, aspartate 241, aspartate 243, and aspartate 245 each contribute to the Mg(2+) site. Residue serine 100 is modified to Phosphoserine.

This sequence belongs to the phosphohexose mutase family. Mg(2+) is required as a cofactor. Activated by phosphorylation.

The catalysed reaction is alpha-D-glucosamine 1-phosphate = D-glucosamine 6-phosphate. Functionally, catalyzes the conversion of glucosamine-6-phosphate to glucosamine-1-phosphate. The chain is Phosphoglucosamine mutase from Caldicellulosiruptor saccharolyticus (strain ATCC 43494 / DSM 8903 / Tp8T 6331).